The chain runs to 1015 residues: Formate dehydrogenase, nitrate-inducible, major subunit (1015 aa).

Residues 1-33 constitute a signal peptide (tat-type signal); that stretch reads MDVSRRQFFKICAGGMAGTTVAALGFAPKQALA. Residues 43 to 106 enclose the 4Fe-4S Mo/W bis-MGD-type domain; sequence AKEIRNTCTY…GLLDYVNSEN (64 aa). Residues cysteine 50, cysteine 53, cysteine 57, and cysteine 92 each coordinate [4Fe-4S] cluster. Residue selenocysteine 196 participates in Mo-bis(molybdopterin guanine dinucleotide) binding. Residue selenocysteine 196 is a non-standard amino acid, selenocysteine.

The protein belongs to the prokaryotic molybdopterin-containing oxidoreductase family. Trimer of heterotrimers, consisting of subunits alpha, beta and gamma. Requires Mo-bis(molybdopterin guanine dinucleotide) as cofactor. [4Fe-4S] cluster serves as cofactor. In terms of processing, exported by the Tat system. The position of the signal peptide cleavage has not been experimentally proven.

It localises to the periplasm. The enzyme catalyses a quinone + formate + H(+) = a quinol + CO2. Its function is as follows. Formate dehydrogenase allows E.coli to use formate as major electron donor during anaerobic respiration, when nitrate is used as electron acceptor. The alpha subunit FdnG contains the formate oxidation site. Electrons are transferred from formate to menaquinone in the gamma subunit (FdnI), through the 4Fe-4S clusters in the beta subunit (FdnH). Formate dehydrogenase-N is part of a system that generates proton motive force, together with the dissimilatory nitrate reductase (Nar). This is Formate dehydrogenase, nitrate-inducible, major subunit (fdnG) from Escherichia coli (strain K12).